The following is a 387-amino-acid chain: Erythronate-4-phosphate dehydrogenase (387 aa).

Ser45 and Thr67 together coordinate substrate. Asp147 serves as a coordination point for NAD(+). Arg208 is an active-site residue. Asp232 serves as a coordination point for NAD(+). Glu237 is an active-site residue. His254 acts as the Proton donor in catalysis. Gly257 is a binding site for NAD(+). Tyr258 contacts substrate.

It belongs to the D-isomer specific 2-hydroxyacid dehydrogenase family. PdxB subfamily. In terms of assembly, homodimer.

The protein resides in the cytoplasm. The enzyme catalyses 4-phospho-D-erythronate + NAD(+) = (R)-3-hydroxy-2-oxo-4-phosphooxybutanoate + NADH + H(+). It participates in cofactor biosynthesis; pyridoxine 5'-phosphate biosynthesis; pyridoxine 5'-phosphate from D-erythrose 4-phosphate: step 2/5. Catalyzes the oxidation of erythronate-4-phosphate to 3-hydroxy-2-oxo-4-phosphonooxybutanoate. The protein is Erythronate-4-phosphate dehydrogenase of Shewanella violacea (strain JCM 10179 / CIP 106290 / LMG 19151 / DSS12).